A 165-amino-acid chain; its full sequence is MAGDTTITVVGNLTADPELRFTPSGAAVANFTVASTPRMFDRQSGEWKDGEALFLRCNIWREAAENVAESLTRGSRVIVTGRLKQRSFETREGEKRTVVEVEVDEIGPSLRYATAKVNKASRSGGGGGGFGSGGGGSRQSEPKDDPWGSAPASGSFSGADDEPPF.

Residues 1–110 (MAGDTTITVV…VEVDEIGPSL (110 aa)) enclose the SSB domain. The tract at residues 117–165 (VNKASRSGGGGGGFGSGGGGSRQSEPKDDPWGSAPASGSFSGADDEPPF) is disordered. Gly residues predominate over residues 123 to 137 (SGGGGGGFGSGGGGS). Low complexity predominate over residues 148–158 (GSAPASGSFSG).

As to quaternary structure, homotetramer. Interacts with RecA.

This is Single-stranded DNA-binding protein (ssb) from Mycolicibacterium smegmatis (strain ATCC 700084 / mc(2)155) (Mycobacterium smegmatis).